Here is a 2272-residue protein sequence, read N- to C-terminus: COPII coat assembly protein SEC16 (2272 aa).

Over residues 1 to 20 the composition is skewed to basic residues; it reads MSTEAKRRRNQKKKQKQKQK. 11 disordered regions span residues 1 to 99, 124 to 401, 430 to 630, 646 to 714, 727 to 785, 832 to 852, 1488 to 1624, 1694 to 1737, 1750 to 1990, 2043 to 2125, and 2146 to 2187; these read MSTE…SPYV, AVDV…HTPE, VSSQ…HNLS, QQFL…EKKK, SKPK…NPYQ, EGAA…LGAY, LNHG…PKRA, QDRR…YRKT, SLAP…EHAV, RASS…KPIK, and KDAT…VGGP. Over residues 151–170 the composition is skewed to low complexity; the sequence is ATPAEPSAAPVAPEAAASEE. 2 stretches are compositionally biased toward basic and acidic residues: residues 215 to 237 and 318 to 339; these read PEQR…ERTQ and EENR…RDQD. The segment covering 481-496 has biased composition (polar residues); that stretch reads AQNTNPNVDTSQQLPV. A compositionally biased stretch (low complexity) spans 497 to 509; the sequence is SRSSAELSSSQAA. Acidic residues predominate over residues 559-598; it reads DNDDDLLNDDEEEEANAGDQPENDQENCDDDSFLDSDEEP. Residues 608 to 621 are compositionally biased toward polar residues; the sequence is TTYTPSTQVLGQDR. Positions 703–714 are enriched in basic and acidic residues; it reads ESVRRLEEEKKK. Polar residues predominate over residues 748-758; the sequence is QPASRSFSPSD. Polar residues-rich tracts occupy residues 1526–1554, 1582–1609, and 1699–1719; these read PGSN…NLHG, PQNS…SIPS, and SAYS…SNIS. Over residues 1750-1761 the composition is skewed to low complexity; sequence SLAPSSVSLSQS. Over residues 1798–1815 the composition is skewed to polar residues; the sequence is SVDTSEYSFPDESVQSWE. The span at 1972–1990 shows a compositional bias: basic and acidic residues; that stretch reads EEGRTDNQTKAVEKQEHAV. The segment covering 2061–2076 has biased composition (acidic residues); it reads YYDDVVEDESDDSEEE. 3 stretches are compositionally biased toward basic and acidic residues: residues 2077–2103, 2114–2123, and 2146–2155; these read SERK…RKNE, LKKDTNEKKP, and KDATEEEKQK.

It belongs to the SEC16 family.

The protein localises to the endoplasmic reticulum membrane. Its function is as follows. Involved in the initiation of assembly of the COPII coat required for the formation of transport vesicles from the endoplasmic reticulum (ER) and the selection of cargo molecules. Also involved in autophagy. The polypeptide is COPII coat assembly protein SEC16 (SEC16) (Eremothecium gossypii (strain ATCC 10895 / CBS 109.51 / FGSC 9923 / NRRL Y-1056) (Yeast)).